A 243-amino-acid chain; its full sequence is Carboxy-S-adenosyl-L-methionine synthase (243 aa).

Residues tyrosine 40, 65–67 (GCS), 90–91 (DN), 118–119 (DI), asparagine 133, and arginine 200 contribute to the S-adenosyl-L-methionine site.

The protein belongs to the class I-like SAM-binding methyltransferase superfamily. Cx-SAM synthase family. In terms of assembly, homodimer.

It carries out the reaction prephenate + S-adenosyl-L-methionine = carboxy-S-adenosyl-L-methionine + 3-phenylpyruvate + H2O. Functionally, catalyzes the conversion of S-adenosyl-L-methionine (SAM) to carboxy-S-adenosyl-L-methionine (Cx-SAM). This is Carboxy-S-adenosyl-L-methionine synthase from Shewanella loihica (strain ATCC BAA-1088 / PV-4).